The chain runs to 327 residues: Serpentine receptor class alpha-33 (327 aa).

A run of 6 helical transmembrane segments spans residues 20–40 (FSVY…VLAI), 56–76 (LLIT…FLQN), 133–153 (FSHA…STVF), 186–206 (IIPY…LIIY), 227–247 (AVVS…LFCF), and 270–290 (IIGW…AVFL).

This sequence belongs to the nematode receptor-like protein sra family.

Its subcellular location is the membrane. The chain is Serpentine receptor class alpha-33 (sra-33) from Caenorhabditis elegans.